Reading from the N-terminus, the 232-residue chain is Glutathione S-transferase E14 (232 aa).

The 82-residue stretch at 4–85 (PKPILYYDER…HLAEKFDEGG (82 aa)) folds into the GST N-terminal domain. In terms of domain architecture, GST C-terminal spans 91–218 (EHAERMKVLN…RQTMESVGSF (128 aa)).

The protein belongs to the GST superfamily. Epsilon family. In terms of tissue distribution, expressed in the adult ovary (at protein level).

The catalysed reaction is RX + glutathione = an S-substituted glutathione + a halide anion + H(+). Conjugation of reduced glutathione to a wide number of exogenous and endogenous hydrophobic electrophiles. Essential for ecdysteroid biosynthesis. May be involved in detoxification. The protein is Glutathione S-transferase E14 of Drosophila melanogaster (Fruit fly).